A 64-amino-acid chain; its full sequence is Chromatin protein Cren7 (64 aa).

The protein belongs to the Cren7 family. In terms of assembly, monomer. In terms of processing, methylated at multiple sites, to varying extents.

The protein resides in the chromosome. Its subcellular location is the cytoplasm. A chromatin protein, binds double-stranded DNA without sequence specificity. Constrains negative DNA supercoils. The polypeptide is Chromatin protein Cren7 (Aeropyrum pernix (strain ATCC 700893 / DSM 11879 / JCM 9820 / NBRC 100138 / K1)).